A 415-amino-acid chain; its full sequence is Serine hydroxymethyltransferase (415 aa).

Residues leucine 117 and 121-123 contribute to the (6S)-5,6,7,8-tetrahydrofolate site; that span reads GHL. Lysine 226 carries the N6-(pyridoxal phosphate)lysine modification. Residue glutamate 241 coordinates (6S)-5,6,7,8-tetrahydrofolate.

It belongs to the SHMT family. In terms of assembly, homodimer. Pyridoxal 5'-phosphate is required as a cofactor.

It is found in the cytoplasm. The enzyme catalyses (6R)-5,10-methylene-5,6,7,8-tetrahydrofolate + glycine + H2O = (6S)-5,6,7,8-tetrahydrofolate + L-serine. It participates in one-carbon metabolism; tetrahydrofolate interconversion. Its pathway is amino-acid biosynthesis; glycine biosynthesis; glycine from L-serine: step 1/1. Catalyzes the reversible interconversion of serine and glycine with tetrahydrofolate (THF) serving as the one-carbon carrier. This reaction serves as the major source of one-carbon groups required for the biosynthesis of purines, thymidylate, methionine, and other important biomolecules. Also exhibits THF-independent aldolase activity toward beta-hydroxyamino acids, producing glycine and aldehydes, via a retro-aldol mechanism. This Bacillus licheniformis (strain ATCC 14580 / DSM 13 / JCM 2505 / CCUG 7422 / NBRC 12200 / NCIMB 9375 / NCTC 10341 / NRRL NRS-1264 / Gibson 46) protein is Serine hydroxymethyltransferase.